Reading from the N-terminus, the 205-residue chain is Cytochrome c biogenesis ATP-binding export protein CcmA 1 (205 aa).

One can recognise an ABC transporter domain in the interval 2 to 205 (LEARDLYCER…LALTGGGAGL (204 aa)). ATP is bound at residue 34–41 (GGNGAGKT).

This sequence belongs to the ABC transporter superfamily. CcmA exporter (TC 3.A.1.107) family. The complex is composed of two ATP-binding proteins (CcmA) and two transmembrane proteins (CcmB).

It is found in the cell inner membrane. The enzyme catalyses heme b(in) + ATP + H2O = heme b(out) + ADP + phosphate + H(+). Its function is as follows. Part of the ABC transporter complex CcmAB involved in the biogenesis of c-type cytochromes; once thought to export heme, this seems not to be the case, but its exact role is uncertain. Responsible for energy coupling to the transport system. This is Cytochrome c biogenesis ATP-binding export protein CcmA 1 from Salmonella typhimurium (strain LT2 / SGSC1412 / ATCC 700720).